A 245-amino-acid chain; its full sequence is DNA repair protein RecO (245 aa).

It belongs to the RecO family.

In terms of biological role, involved in DNA repair and RecF pathway recombination. The polypeptide is DNA repair protein RecO (Porphyromonas gingivalis (strain ATCC BAA-308 / W83)).